The chain runs to 125 residues: Allatostatin (125 aa).

The N-terminal stretch at 1–26 (MKTSAYNVYLGVVAAMLALLFVTINA) is a signal peptide. Positions 27–106 (APMEADDETA…SRLARQWRAD (80 aa)) are excised as a propeptide. Q109 carries the pyrrolidone carboxylic acid modification.

This sequence belongs to the allatostatin family.

It localises to the secreted. Its function is as follows. Strongly inhibits juvenile hormone biosynthesis in vitro by the corpora allata from fifth-stadium larvae and adult females. The protein is Allatostatin of Spodoptera frugiperda (Fall armyworm).